The chain runs to 410 residues: LL-diaminopimelate aminotransferase (410 aa).

Substrate-binding residues include Tyr15 and Gly42. Pyridoxal 5'-phosphate is bound by residues Tyr72, 108–109 (SK), Tyr132, Asn187, Tyr218, and 246–248 (SFS). 3 residues coordinate substrate: Lys109, Tyr132, and Asn187. An N6-(pyridoxal phosphate)lysine modification is found at Lys249. The pyridoxal 5'-phosphate site is built by Arg257 and Asn292. The substrate site is built by Asn292 and Arg388.

It belongs to the class-I pyridoxal-phosphate-dependent aminotransferase family. LL-diaminopimelate aminotransferase subfamily. Homodimer. Pyridoxal 5'-phosphate serves as cofactor.

The catalysed reaction is (2S,6S)-2,6-diaminopimelate + 2-oxoglutarate = (S)-2,3,4,5-tetrahydrodipicolinate + L-glutamate + H2O + H(+). Its pathway is amino-acid biosynthesis; L-lysine biosynthesis via DAP pathway; LL-2,6-diaminopimelate from (S)-tetrahydrodipicolinate (aminotransferase route): step 1/1. In terms of biological role, involved in the synthesis of meso-diaminopimelate (m-DAP or DL-DAP), required for both lysine and peptidoglycan biosynthesis. Catalyzes the direct conversion of tetrahydrodipicolinate to LL-diaminopimelate. This Geotalea uraniireducens (strain Rf4) (Geobacter uraniireducens) protein is LL-diaminopimelate aminotransferase.